Consider the following 29-residue polypeptide: Cyclotide mela-3 (29 aa).

The cyclopeptide (Gly-Asp) cross-link spans 1 to 29 (GKPICGETCFKGKCYTPGCTCSYPICKKD). 3 disulfides stabilise this stretch: Cys-5/Cys-19, Cys-9/Cys-21, and Cys-14/Cys-26.

This is a cyclic peptide. Post-translationally, contains 3 disulfide bonds.

In terms of biological role, probably participates in a plant defense mechanism (Potential). Binds to and induces leakage in phospholipd membranes, particularly ones containing 1-palmitoyl-2-oleophosphatidylethanolamine (POPE). In vitro, displays cytotoxicity against cultured cells. Not active against Gram-negative bacterium E.coli ATCC 25922 or Gram-positive bacterium S.aureus ATCC 25923 up to a concentration of 64 uM. The polypeptide is Cyclotide mela-3 (Melicytus latifolius (Norfolk Island mahoe)).